Here is a 257-residue protein sequence, read N- to C-terminus: uncharacterized protein (257 aa).

Residues 7–27 (LFLCVSFLLITIFIGGGGFMN) traverse the membrane as a helical segment.

It belongs to the staphylococcal tandem lipoprotein family.

It localises to the cell membrane. This is an uncharacterized protein from Staphylococcus epidermidis (strain ATCC 12228 / FDA PCI 1200).